The chain runs to 263 residues: Purine nucleoside phosphorylase SERP0752 (263 aa).

Zn(2+) is bound by residues His-79, Cys-124, and His-141.

It belongs to the purine nucleoside phosphorylase YfiH/LACC1 family. In terms of assembly, homodimer. Cu(2+) is required as a cofactor. Requires Zn(2+) as cofactor.

The enzyme catalyses adenosine + phosphate = alpha-D-ribose 1-phosphate + adenine. It catalyses the reaction S-methyl-5'-thioadenosine + phosphate = 5-(methylsulfanyl)-alpha-D-ribose 1-phosphate + adenine. The catalysed reaction is inosine + phosphate = alpha-D-ribose 1-phosphate + hypoxanthine. It carries out the reaction adenosine + H2O + H(+) = inosine + NH4(+). Purine nucleoside enzyme that catalyzes the phosphorolysis of adenosine and inosine nucleosides, yielding D-ribose 1-phosphate and the respective free bases, adenine and hypoxanthine. Also catalyzes the phosphorolysis of S-methyl-5'-thioadenosine into adenine and S-methyl-5-thio-alpha-D-ribose 1-phosphate. Also has adenosine deaminase activity. This chain is Purine nucleoside phosphorylase SERP0752, found in Staphylococcus epidermidis (strain ATCC 35984 / DSM 28319 / BCRC 17069 / CCUG 31568 / BM 3577 / RP62A).